Here is a 260-residue protein sequence, read N- to C-terminus: Triosephosphate isomerase (260 aa).

Substrate is bound at residue 11–13 (NWK). H103 acts as the Electrophile in catalysis. Catalysis depends on E175, which acts as the Proton acceptor. Residues G181, S220, and 241–242 (GG) each bind substrate.

Belongs to the triosephosphate isomerase family. Homodimer.

The protein localises to the cytoplasm. It catalyses the reaction D-glyceraldehyde 3-phosphate = dihydroxyacetone phosphate. It participates in carbohydrate biosynthesis; gluconeogenesis. The protein operates within carbohydrate degradation; glycolysis; D-glyceraldehyde 3-phosphate from glycerone phosphate: step 1/1. Involved in the gluconeogenesis. Catalyzes stereospecifically the conversion of dihydroxyacetone phosphate (DHAP) to D-glyceraldehyde-3-phosphate (G3P). This Shewanella denitrificans (strain OS217 / ATCC BAA-1090 / DSM 15013) protein is Triosephosphate isomerase.